A 345-amino-acid chain; its full sequence is MISNFDCTDNQASSKVLRPPGGGSSDIFGSEMPQTPRNVKNRMASNIFAAEKDNGVKNNVRQGAHRFYFIGDAPRRGQKTVDSHNRLFGEPTRPITPGKNHMKSSIPFGQNTEAVASAQKLLTTNGHYNGKSGSVSSASSSVSSSTENLKMNSGSRSVFRNMSTGPAVKETSLPESLCPPSPVRIEPPTPPADALSIDNSCRDSEIGDVPADNSTYTKSDQVNEACQTRRDSGNNPEQPHSLDKMAGVANIKEPLGLCPNDVKEGAQACSKLDSRNPITGLGLNGDGVGGLKPKKLKIREGNPVTGEGYKAGGNDYNQRQESSNAGTPVINKNRIPPGGYSSGLW.

Polar residues predominate over residues 1 to 14; the sequence is MISNFDCTDNQASS. Positions 1 to 34 are disordered; it reads MISNFDCTDNQASSKVLRPPGGGSSDIFGSEMPQ. A Phosphoserine modification is found at Ser24. Thr35 is modified (phosphothreonine). Residues 78-87 are compositionally biased toward basic and acidic residues; sequence QKTVDSHNRL. The segment at 78-100 is disordered; sequence QKTVDSHNRLFGEPTRPITPGKN. Phosphothreonine is present on residues Thr92 and Thr96. Residues Ser105, Ser134, and Ser145 each carry the phosphoserine modification. 2 disordered regions span residues 127-241 and 300-345; these read HYNG…QPHS and EGNP…SGLW. A compositionally biased stretch (low complexity) spans 132–145; it reads SGSVSSASSSVSSS. The span at 146–164 shows a compositional bias: polar residues; it reads TENLKMNSGSRSVFRNMST. Residues 177–191 show a composition bias toward pro residues; sequence LCPPSPVRIEPPTPP. Composition is skewed to polar residues over residues 212–226 and 315–326; these read DNST…NEAC and DYNQRQESSNAG.

It belongs to the MAP Jupiter family.

The protein resides in the nucleus. It localises to the cytoplasm. Its subcellular location is the cytoskeleton. It is found in the spindle. In terms of biological role, binds to all microtubule populations. In Drosophila erecta (Fruit fly), this protein is Microtubule-associated protein Jupiter.